A 666-amino-acid chain; its full sequence is Chaperone protein HtpG (666 aa).

The tract at residues 1–374 (MSELNPVDNQ…SADLPLNVSR (374 aa)) is a; substrate-binding. The b stretch occupies residues 375–593 (ELLQESRDVK…EGELSPQMIQ (219 aa)). Positions 594 to 666 (MLKQMGQDVP…LRRVNELLMR (73 aa)) are c.

It belongs to the heat shock protein 90 family. In terms of assembly, homodimer.

The protein resides in the cytoplasm. Molecular chaperone. Has ATPase activity. The sequence is that of Chaperone protein HtpG from Psychrobacter cryohalolentis (strain ATCC BAA-1226 / DSM 17306 / VKM B-2378 / K5).